Here is a 2495-residue protein sequence, read N- to C-terminus: Zinc finger protein 462 (2495 aa).

C2H2-type zinc fingers lie at residues 4-27 (LQCD…QDVH), 108-131 (FQCK…RKVH), and 162-185 (FSCQ…KMYH). K20 participates in a covalent cross-link: Glycyl lysine isopeptide (Lys-Gly) (interchain with G-Cter in SUMO1); alternate. K20 participates in a covalent cross-link: Glycyl lysine isopeptide (Lys-Gly) (interchain with G-Cter in SUMO2); alternate. Positions 215–241 (PCKELPAEVVERSILESMVKPLTKSRG) are interaction with PBX1. Residues K234 and K271 each participate in a glycyl lysine isopeptide (Lys-Gly) (interchain with G-Cter in SUMO2) cross-link. 3 disordered regions span residues 278 to 301 (QQEG…NSTY), 329 to 357 (RPNS…NSGL), and 370 to 395 (DMTN…DLNE). Low complexity predominate over residues 332 to 343 (SSSTSKFSSSMS). Glycyl lysine isopeptide (Lys-Gly) (interchain with G-Cter in SUMO2) cross-links involve residues K337, K348, and K350. Phosphoserine occurs at positions 351 and 355. A compositionally biased stretch (polar residues) spans 370 to 387 (DMTNSSADLDTNSMLNDS). A Glycyl lysine isopeptide (Lys-Gly) (interchain with G-Cter in SUMO2) cross-link involves residue K429. 2 consecutive C2H2-type zinc fingers follow at residues 440–463 (FQCP…ENIH) and 471–493 (YKCD…KQCH). K485 is covalently cross-linked (Glycyl lysine isopeptide (Lys-Gly) (interchain with G-Cter in SUMO2)). Residues 492 to 590 (CHTGTSDWDT…PQPPTQAPPL (99 aa)) form a disordered region. Positions 493–502 (HTGTSDWDTV) are enriched in polar residues. Residues 503 to 515 (NSQSESLSSSLNE) are compositionally biased toward low complexity. Positions 542 to 590 (PPQPPPPLPPPPPPPSQPLPQPPPPPLQSPHQVPPPTQQPQPPTQAPPL) are enriched in pro residues. The segment at 593-616 (YKCTMCSYSTMTLKGLRVHQQHKH) adopts a C2H2-type 6 zinc-finger fold. Residues K624, K650, and K661 each participate in a glycyl lysine isopeptide (Lys-Gly) (interchain with G-Cter in SUMO2) cross-link. Positions 629–654 (PSSLPLENETDSHPSSSNTVKKSQTS) are disordered. Residues 641–654 (HPSSSNTVKKSQTS) show a composition bias toward polar residues. A Phosphoserine modification is found at S681. Residue K699 forms a Glycyl lysine isopeptide (Lys-Gly) (interchain with G-Cter in SUMO2) linkage. C2H2-type zinc fingers lie at residues 835-858 (YYCK…QRMH), 878-900 (YRCL…YGEH), and 917-940 (YRCR…QRMH). A Glycyl lysine isopeptide (Lys-Gly) (interchain with G-Cter in SUMO2) cross-link involves residue K978. The interval 980 to 999 (MATSTPVARGGGLPATFNKN) is disordered. The C2H2-type 10 zinc-finger motif lies at 1023–1046 (YDCDVCSFASPNMHSVLVHYQKKH). S1083 carries the post-translational modification Phosphoserine. A Glycyl lysine isopeptide (Lys-Gly) (interchain with G-Cter in SUMO2) cross-link involves residue K1128. S1159 bears the Phosphoserine mark. Residues K1196, K1204, K1210, and K1232 each participate in a glycyl lysine isopeptide (Lys-Gly) (interchain with G-Cter in SUMO2) cross-link. 2 C2H2-type zinc fingers span residues 1254 to 1277 (LKCR…KKDH) and 1459 to 1482 (YQCT…GKKH). Residue K1488 forms a Glycyl lysine isopeptide (Lys-Gly) (interchain with G-Cter in SUMO2) linkage. The C2H2-type 13 zinc finger occupies 1504-1527 (YKCRHCPYINTRIHGVLTHYQKRH). Residues K1560 and K1580 each participate in a glycyl lysine isopeptide (Lys-Gly) (interchain with G-Cter in SUMO2) cross-link. 3 consecutive C2H2-type zinc fingers follow at residues 1566-1589 (YRCK…EKYH), 1649-1672 (FRCQ…RIKH), and 1686-1709 (FKCA…QKRH). Residues K1687 and K1769 each participate in a glycyl lysine isopeptide (Lys-Gly) (interchain with G-Cter in SUMO2) cross-link. The segment at 1881 to 1903 (FQCKHCDSKLQSIAELTSHLNIH) adopts a C2H2-type 17 zinc-finger fold. A Glycyl lysine isopeptide (Lys-Gly) (interchain with G-Cter in SUMO2) cross-link involves residue K1935. The segment at 1957 to 1981 (YKCKFCVEVHPTLRAICNHLRKHVQ) adopts a C2H2-type 18; degenerate zinc-finger fold. K1993 carries the N6-methyllysine modification. C2H2-type zinc fingers lie at residues 2014-2037 (YSCQ…QTHH), 2043-2066 (FRCK…LKAH), and 2072-2095 (YKCS…LKVH). Residue K2093 forms a Glycyl lysine isopeptide (Lys-Gly) (interchain with G-Cter in SUMO2) linkage. Composition is skewed to polar residues over residues 2112–2121 (SHAHPSSQKA) and 2132–2149 (DSSY…NHYQ). Residues 2112–2172 (SHAHPSSQKA…VPPSGTAAGT (61 aa)) are disordered. Phosphoserine occurs at positions 2161 and 2166. 3 consecutive C2H2-type zinc fingers follow at residues 2180–2203 (LHCE…RDKH), 2209–2232 (FKCK…EAGH), and 2243–2265 (LRCP…IVLH). K2282 participates in a covalent cross-link: Glycyl lysine isopeptide (Lys-Gly) (interchain with G-Cter in SUMO2). C2H2-type zinc fingers lie at residues 2289–2311 (FRCD…IEKH) and 2317–2340 (YKCQ…RDEH). The tract at residues 2361-2387 (KEKIESSSSEDEDKDDEMSSKAEDREL) is disordered. Residues 2377-2387 (EMSSKAEDREL) show a composition bias toward basic and acidic residues. Residues 2403-2425 (FPCEFCGRAFSQGSEWERHVLRH) form a C2H2-type 27 zinc finger. A Glycyl lysine isopeptide (Lys-Gly) (interchain with G-Cter in SUMO2) cross-link involves residue K2493.

Interacts with PBX1 isoform PBX1b; this interaction prevents PBX1-HOXA9 heterodimer from forming and binding to DNA. In terms of tissue distribution, expressed in the cerebral cortex (at protein level). Expressed in embryonic stem cells (at protein level). Expressed in heart, liver, kidney, muscle, and female and male genital tracts (at protein level).

Its subcellular location is the nucleus. In terms of biological role, zinc finger nuclear factor involved in transcription by regulating chromatin structure and organization. Involved in the pluripotency and differentiation of embryonic stem cells by regulating SOX2, POU5F1/OCT4, and NANOG. By binding PBX1, prevents the heterodimerization of PBX1 and HOXA9 and their binding to DNA. Regulates neuronal development and neural cell differentiation. This Mus musculus (Mouse) protein is Zinc finger protein 462.